The following is a 298-amino-acid chain: Thymidylate synthase (298 aa).

DUMP contacts are provided by residues Arg25 and Arg159–Arg160. Cys179 serves as the catalytic Nucleophile. DUMP-binding positions include Arg200–Asp203, Asn211, and His241–Tyr243. Asp203 is a (6R)-5,10-methylene-5,6,7,8-tetrahydrofolate binding site. A (6R)-5,10-methylene-5,6,7,8-tetrahydrofolate-binding site is contributed by Ala297.

It belongs to the thymidylate synthase family. Bacterial-type ThyA subfamily. As to quaternary structure, homodimer.

The protein localises to the cytoplasm. It catalyses the reaction dUMP + (6R)-5,10-methylene-5,6,7,8-tetrahydrofolate = 7,8-dihydrofolate + dTMP. It functions in the pathway pyrimidine metabolism; dTTP biosynthesis. In terms of biological role, catalyzes the reductive methylation of 2'-deoxyuridine-5'-monophosphate (dUMP) to 2'-deoxythymidine-5'-monophosphate (dTMP) while utilizing 5,10-methylenetetrahydrofolate (mTHF) as the methyl donor and reductant in the reaction, yielding dihydrofolate (DHF) as a by-product. This enzymatic reaction provides an intracellular de novo source of dTMP, an essential precursor for DNA biosynthesis. The protein is Thymidylate synthase of Rhodopseudomonas palustris (strain BisA53).